The chain runs to 569 residues: MLO-like protein 10 (569 aa).

At 1 to 41 the chain is on the extracellular side; it reads MATRCFWCWTTLLFCSQLLTGFARASSAGGAKEKGLSQTPT. Residues 42–62 form a helical membrane-spanning segment; sequence WAVALVCTFFILVSVLLEKAL. Topologically, residues 63-85 are cytoplasmic; the sequence is HRVATWLWEKHKNSLLEALEKIK. The chain crosses the membrane as a helical span at residues 86 to 106; that stretch reads AELMILGFISLLLTFGEQYIL. At 107 to 163 the chain is on the extracellular side; that stretch reads KICIPEKAAASMLPCPAPSTHDQDKTHRRRLAAATTSSRCDEGHEPLIPATGLHQLH. Residues 164-184 traverse the membrane as a helical segment; that stretch reads ILLFFMAAFHILYSFITMMLG. At 185-286 the chain is on the cytoplasmic side; it reads RLKIRGWKKW…IKRSLEDDFK (102 aa). A helical membrane pass occupies residues 287–307; it reads VVVGISPLLWASFVIFLLLNV. Residue Asn308 is a topological domain, extracellular. The chain crosses the membrane as a helical span at residues 309-329; that stretch reads GWEALFWASILPVLIILAVST. The Cytoplasmic segment spans residues 330–372; it reads KLQAILTRMALGITERHAVVQGIPLVHGSDKYFWFNRPQLLLH. A helical transmembrane segment spans residues 373–393; that stretch reads LLHFALFQNAFQLTYFFWVWY. At 394 to 413 the chain is on the extracellular side; it reads SFGLKSCFHTDFKLVIVKLS. A helical membrane pass occupies residues 414–434; it reads LGVGALILCSYITLPLYALVT. Over 435-569 the chain is Cytoplasmic; that stretch reads QMGSNMKKAV…VKNVPANDID (135 aa). The segment at 447–468 is calmodulin-binding; the sequence is EQMAKALKKWHMTVKKKKGKAR.

The protein belongs to the MLO family.

It is found in the membrane. May be involved in modulation of pathogen defense and leaf cell death. Activity seems to be regulated by Ca(2+)-dependent calmodulin binding and seems not to require heterotrimeric G proteins. This is MLO-like protein 10 (MLO10) from Arabidopsis thaliana (Mouse-ear cress).